A 439-amino-acid polypeptide reads, in one-letter code: 3-phosphoshikimate 1-carboxyvinyltransferase (439 aa).

Residues K29, S30, and R34 each coordinate 3-phosphoshikimate. A phosphoenolpyruvate-binding site is contributed by K29. The phosphoenolpyruvate site is built by G100 and R128. S173, S174, Q175, S201, D321, and K348 together coordinate 3-phosphoshikimate. A phosphoenolpyruvate-binding site is contributed by Q175. D321 serves as the catalytic Proton acceptor. Residues R352 and R395 each contribute to the phosphoenolpyruvate site.

The protein belongs to the EPSP synthase family. In terms of assembly, monomer.

Its subcellular location is the cytoplasm. The catalysed reaction is 3-phosphoshikimate + phosphoenolpyruvate = 5-O-(1-carboxyvinyl)-3-phosphoshikimate + phosphate. Its pathway is metabolic intermediate biosynthesis; chorismate biosynthesis. In terms of biological role, catalyzes the transfer of the enolpyruvyl moiety of phosphoenolpyruvate (PEP) to the 5-hydroxyl of shikimate-3-phosphate (S3P) to produce enolpyruvyl shikimate-3-phosphate and inorganic phosphate. The protein is 3-phosphoshikimate 1-carboxyvinyltransferase of Halobacterium salinarum (strain ATCC 700922 / JCM 11081 / NRC-1) (Halobacterium halobium).